A 184-amino-acid chain; its full sequence is Large ribosomal subunit protein uL6 (184 aa).

This sequence belongs to the universal ribosomal protein uL6 family. In terms of assembly, part of the 50S ribosomal subunit.

Functionally, this protein binds to the 23S rRNA, and is important in its secondary structure. It is located near the subunit interface in the base of the L7/L12 stalk, and near the tRNA binding site of the peptidyltransferase center. This is Large ribosomal subunit protein uL6 from Desulfitobacterium hafniense (strain Y51).